The primary structure comprises 427 residues: Serine hydroxymethyltransferase (427 aa).

(6S)-5,6,7,8-tetrahydrofolate-binding positions include Leu-118 and 122 to 124; that span reads GHL. The residue at position 227 (Lys-227) is an N6-(pyridoxal phosphate)lysine. Residues Glu-243 and 351-353 each bind (6S)-5,6,7,8-tetrahydrofolate; that span reads SPF.

It belongs to the SHMT family. As to quaternary structure, homodimer. Requires pyridoxal 5'-phosphate as cofactor.

The protein resides in the cytoplasm. The catalysed reaction is (6R)-5,10-methylene-5,6,7,8-tetrahydrofolate + glycine + H2O = (6S)-5,6,7,8-tetrahydrofolate + L-serine. It participates in one-carbon metabolism; tetrahydrofolate interconversion. Its pathway is amino-acid biosynthesis; glycine biosynthesis; glycine from L-serine: step 1/1. In terms of biological role, catalyzes the reversible interconversion of serine and glycine with tetrahydrofolate (THF) serving as the one-carbon carrier. This reaction serves as the major source of one-carbon groups required for the biosynthesis of purines, thymidylate, methionine, and other important biomolecules. Also exhibits THF-independent aldolase activity toward beta-hydroxyamino acids, producing glycine and aldehydes, via a retro-aldol mechanism. This is Serine hydroxymethyltransferase from Thermotoga maritima (strain ATCC 43589 / DSM 3109 / JCM 10099 / NBRC 100826 / MSB8).